The following is a 390-amino-acid chain: Succinate--CoA ligase [ADP-forming] subunit beta (390 aa).

In terms of domain architecture, ATP-grasp spans 9–245; it reads KELLSRYGLP…KSQENEREVK (237 aa). Residues K46, 53–55, E100, Y103, and E108 each bind ATP; that span reads GRG. 2 residues coordinate Mg(2+): N200 and D214. Residues N265 and 322–324 each bind substrate; that span reads GIV.

Belongs to the succinate/malate CoA ligase beta subunit family. In terms of assembly, heterotetramer of two alpha and two beta subunits. Requires Mg(2+) as cofactor.

It carries out the reaction succinate + ATP + CoA = succinyl-CoA + ADP + phosphate. The catalysed reaction is GTP + succinate + CoA = succinyl-CoA + GDP + phosphate. It participates in carbohydrate metabolism; tricarboxylic acid cycle; succinate from succinyl-CoA (ligase route): step 1/1. Functionally, succinyl-CoA synthetase functions in the citric acid cycle (TCA), coupling the hydrolysis of succinyl-CoA to the synthesis of either ATP or GTP and thus represents the only step of substrate-level phosphorylation in the TCA. The beta subunit provides nucleotide specificity of the enzyme and binds the substrate succinate, while the binding sites for coenzyme A and phosphate are found in the alpha subunit. This chain is Succinate--CoA ligase [ADP-forming] subunit beta, found in Chromobacterium violaceum (strain ATCC 12472 / DSM 30191 / JCM 1249 / CCUG 213 / NBRC 12614 / NCIMB 9131 / NCTC 9757 / MK).